The sequence spans 493 residues: Protein LTV1 homolog (493 aa).

Disordered regions lie at residues 42 to 63 (AAAR…QRQE), 97 to 119 (PNQA…KLML), and 170 to 207 (IQAM…DENE). Over residues 176–207 (GDSDDEEWDDEDGEEQSDMDFDSDDLNEDENE) the composition is skewed to acidic residues. 5 positions are modified to phosphoserine: S345, S369, S370, S424, and S427. A disordered region spans residues 359–387 (VIDEPRRSRRSSASTNPAPIQIDPKTGLP). Residues 437 to 468 (KDETHEEKKERKRLLKDYRNERRIEKKANTEA) are a coiled coil. Residues 465–474 (NTEAFKEEKK) show a composition bias toward basic and acidic residues. The disordered stretch occupies residues 465-493 (NTEAFKEEKKRQTHVKINQRTNQQGASIV). The span at 479–493 (VKINQRTNQQGASIV) shows a compositional bias: polar residues.

This sequence belongs to the LTV1 family. As to quaternary structure, interacts with RpS3; the interaction is RNA-independent. Associates with free 40S ribosome subunits.

It localises to the cytoplasm. Functionally, necessary for the biogenesis of 40S ribosome subunits by regulating pre-rRNA processing. Non-ribosomal factor required for efficient nuclear export of the ribosomal 40S subunit. Necessary for endoreplication driven by Myc. This Drosophila melanogaster (Fruit fly) protein is Protein LTV1 homolog.